We begin with the raw amino-acid sequence, 551 residues long: Probable alpha-glucosidase (551 aa).

The active-site Nucleophile is the D212. E272 acts as the Proton donor in catalysis.

It belongs to the glycosyl hydrolase 13 family.

It carries out the reaction Hydrolysis of terminal, non-reducing (1-&gt;4)-linked alpha-D-glucose residues with release of alpha-D-glucose.. The protein is Probable alpha-glucosidase (aglA) of Rhizobium meliloti (strain 1021) (Ensifer meliloti).